The sequence spans 270 residues: Urease accessory protein UreD (270 aa).

This sequence belongs to the UreD family. UreD, UreF and UreG form a complex that acts as a GTP-hydrolysis-dependent molecular chaperone, activating the urease apoprotein by helping to assemble the nickel containing metallocenter of UreC. The UreE protein probably delivers the nickel.

The protein localises to the cytoplasm. Functionally, required for maturation of urease via the functional incorporation of the urease nickel metallocenter. This Actinobacillus pleuropneumoniae serotype 7 (strain AP76) protein is Urease accessory protein UreD.